Reading from the N-terminus, the 427-residue chain is Putative F-box protein At3g44060 (427 aa).

The region spanning 1–46 is the F-box domain; that stretch reads MDCLPDDLLVQILYLLPTKEAVSTSVLSKRWRTLFTRSDNLDFHDP.

In Arabidopsis thaliana (Mouse-ear cress), this protein is Putative F-box protein At3g44060.